The chain runs to 459 residues: tRNA modification GTPase MnmE (459 aa).

3 residues coordinate (6S)-5-formyl-5,6,7,8-tetrahydrofolate: Arg-22, Glu-85, and Arg-124. The 160-residue stretch at 221–380 (GLSTVIVGKP…LEIQIRDLFF (160 aa)) folds into the TrmE-type G domain. Asn-231 is a K(+) binding site. GTP contacts are provided by residues 231-236 (NVGKSS), 250-256 (TEVAGTT), and 275-278 (DTAG). Ser-235 contacts Mg(2+). K(+) is bound by residues Thr-250, Val-252, and Thr-255. Mg(2+) is bound at residue Thr-256. Lys-459 is a binding site for (6S)-5-formyl-5,6,7,8-tetrahydrofolate.

The protein belongs to the TRAFAC class TrmE-Era-EngA-EngB-Septin-like GTPase superfamily. TrmE GTPase family. In terms of assembly, homodimer. Heterotetramer of two MnmE and two MnmG subunits. The cofactor is K(+).

It is found in the cytoplasm. Its function is as follows. Exhibits a very high intrinsic GTPase hydrolysis rate. Involved in the addition of a carboxymethylaminomethyl (cmnm) group at the wobble position (U34) of certain tRNAs, forming tRNA-cmnm(5)s(2)U34. The sequence is that of tRNA modification GTPase MnmE from Staphylococcus aureus (strain bovine RF122 / ET3-1).